The chain runs to 330 residues: Lipoyl synthase (330 aa).

Cys-77, Cys-82, Cys-88, Cys-103, Cys-107, Cys-110, and Ser-317 together coordinate [4Fe-4S] cluster. The Radical SAM core domain maps to 89-306; it reads FNHGTATFMI…RSEAERMGFE (218 aa).

This sequence belongs to the radical SAM superfamily. Lipoyl synthase family. [4Fe-4S] cluster is required as a cofactor.

The protein resides in the cytoplasm. It catalyses the reaction [[Fe-S] cluster scaffold protein carrying a second [4Fe-4S](2+) cluster] + N(6)-octanoyl-L-lysyl-[protein] + 2 oxidized [2Fe-2S]-[ferredoxin] + 2 S-adenosyl-L-methionine + 4 H(+) = [[Fe-S] cluster scaffold protein] + N(6)-[(R)-dihydrolipoyl]-L-lysyl-[protein] + 4 Fe(3+) + 2 hydrogen sulfide + 2 5'-deoxyadenosine + 2 L-methionine + 2 reduced [2Fe-2S]-[ferredoxin]. Its pathway is protein modification; protein lipoylation via endogenous pathway; protein N(6)-(lipoyl)lysine from octanoyl-[acyl-carrier-protein]: step 2/2. Functionally, catalyzes the radical-mediated insertion of two sulfur atoms into the C-6 and C-8 positions of the octanoyl moiety bound to the lipoyl domains of lipoate-dependent enzymes, thereby converting the octanoylated domains into lipoylated derivatives. The polypeptide is Lipoyl synthase (Actinobacillus pleuropneumoniae serotype 3 (strain JL03)).